Reading from the N-terminus, the 495-residue chain is Bifunctional protein GlmU (495 aa).

Residues 1–241 form a pyrophosphorylase region; that stretch reads MPQQTAVVVL…AAKVTGVNDR (241 aa). UDP-N-acetyl-alpha-D-glucosamine is bound by residues 10-13, lysine 24, glutamine 81, and 86-87; these read LAAG and GT. Mg(2+) is bound at residue aspartate 112. UDP-N-acetyl-alpha-D-glucosamine is bound by residues glycine 151, glutamate 166, asparagine 181, and asparagine 239. Residue asparagine 239 participates in Mg(2+) binding. Residues 242–262 are linker; the sequence is VQLSIATRTMNRYILERHMRA. Positions 263 to 495 are N-acetyltransferase; sequence GVTIIDPAST…QATEQKDGEQ (233 aa). UDP-N-acetyl-alpha-D-glucosamine-binding residues include arginine 344 and lysine 362. The Proton acceptor role is filled by histidine 374. UDP-N-acetyl-alpha-D-glucosamine-binding residues include tyrosine 377 and asparagine 388. Residues alanine 391, 397–398, serine 416, and alanine 434 contribute to the acetyl-CoA site; that span reads NY. The interval 467 to 495 is disordered; sequence GTAAATAAAQALAADEKSSQATEQKDGEQ. Over residues 468–479 the composition is skewed to low complexity; the sequence is TAAATAAAQALA. The segment covering 480–495 has biased composition (basic and acidic residues); it reads ADEKSSQATEQKDGEQ.

It in the N-terminal section; belongs to the N-acetylglucosamine-1-phosphate uridyltransferase family. The protein in the C-terminal section; belongs to the transferase hexapeptide repeat family. Homotrimer. Mg(2+) is required as a cofactor.

It localises to the cytoplasm. The enzyme catalyses alpha-D-glucosamine 1-phosphate + acetyl-CoA = N-acetyl-alpha-D-glucosamine 1-phosphate + CoA + H(+). It carries out the reaction N-acetyl-alpha-D-glucosamine 1-phosphate + UTP + H(+) = UDP-N-acetyl-alpha-D-glucosamine + diphosphate. It participates in nucleotide-sugar biosynthesis; UDP-N-acetyl-alpha-D-glucosamine biosynthesis; N-acetyl-alpha-D-glucosamine 1-phosphate from alpha-D-glucosamine 6-phosphate (route II): step 2/2. Its pathway is nucleotide-sugar biosynthesis; UDP-N-acetyl-alpha-D-glucosamine biosynthesis; UDP-N-acetyl-alpha-D-glucosamine from N-acetyl-alpha-D-glucosamine 1-phosphate: step 1/1. The protein operates within bacterial outer membrane biogenesis; LPS lipid A biosynthesis. Its function is as follows. Catalyzes the last two sequential reactions in the de novo biosynthetic pathway for UDP-N-acetylglucosamine (UDP-GlcNAc). The C-terminal domain catalyzes the transfer of acetyl group from acetyl coenzyme A to glucosamine-1-phosphate (GlcN-1-P) to produce N-acetylglucosamine-1-phosphate (GlcNAc-1-P), which is converted into UDP-GlcNAc by the transfer of uridine 5-monophosphate (from uridine 5-triphosphate), a reaction catalyzed by the N-terminal domain. The polypeptide is Bifunctional protein GlmU (Nocardia farcinica (strain IFM 10152)).